A 679-amino-acid chain; its full sequence is Altered inheritance of mitochondria protein 21 (679 aa).

A disordered region spans residues 1-85 (MPSEVTPKVP…LQRPVRRSTT (85 aa)). A compositionally biased stretch (basic and acidic residues) spans 9–19 (VPERPSRRKTS). Position 18 is a phosphothreonine (threonine 18). At serine 36 the chain carries Phosphoserine. Threonine 58 carries the post-translational modification Phosphothreonine. Serine 70 is modified (phosphoserine). At threonine 85 the chain carries Phosphothreonine. Serine 104 bears the Phosphoserine mark. The span at 110-119 (NIHNVSRKKS) shows a compositional bias: basic residues. 3 disordered regions span residues 110–522 (NIHN…EKIE), 549–580 (IDTT…PNKM), and 593–679 (EKLP…FHSL). Polar residues-rich tracts occupy residues 133 to 149 (QNGQ…TNPS) and 164 to 178 (SAIS…SNNE). A compositionally biased stretch (basic and acidic residues) spans 179-213 (VTEHSDSEDLTEKQKVHAALDNEAGDRSHFEEKLI). A phosphoserine mark is found at serine 183, serine 206, and serine 231. Basic and acidic residues predominate over residues 243–272 (SDDKAEKFTKHPESSLEELQKHQEQQEEKI). Threonine 277 is modified (phosphothreonine). Serine 284 carries the phosphoserine modification. Residues 296–323 (EVNSQPQGPSDTETVIAATSSNVPSQIA) show a composition bias toward polar residues. A Phosphoserine modification is found at serine 324. Composition is skewed to basic and acidic residues over residues 339-361 (KKDF…RVSE) and 372-383 (EESKIPKIPSER). An interaction with SH3 domain of ABP1 region spans residues 383-396 (RPKRRAPPPVPKKP). 2 stretches are compositionally biased toward polar residues: residues 414-427 (DLHN…TTAS) and 437-452 (SSIT…TSKL). Basic and acidic residues predominate over residues 471 to 482 (LEKKLSSPDTES). Positions 501–512 (RRGRGPRGRKLP) are enriched in basic residues. Threonine 552 is modified (phosphothreonine). Residues 556-576 (QAERALDEKSKSIPEEQREQS) are compositionally biased toward basic and acidic residues. Serine 576 carries the phosphoserine modification. Over residues 603–613 (PLSQLPQTNAV) the composition is skewed to polar residues. Serine 620, serine 623, serine 625, serine 627, serine 667, serine 671, serine 675, and serine 678 each carry phosphoserine. Over residues 667-679 (SALHSEEASFHSL) the composition is skewed to basic and acidic residues.

This sequence belongs to the AIM21 family. In terms of assembly, interacts with ribosomes. Interacts with ABP1.

It localises to the cytoplasm. Its subcellular location is the cytoskeleton. The protein localises to the actin patch. Its function is as follows. Involved in mitochondrial migration along actin filaments. The protein is Altered inheritance of mitochondria protein 21 (AIM21) of Saccharomyces cerevisiae (strain ATCC 204508 / S288c) (Baker's yeast).